The following is a 105-amino-acid chain: Iron-sulfur cluster assembly protein CyaY (105 aa).

This sequence belongs to the frataxin family.

In terms of biological role, involved in iron-sulfur (Fe-S) cluster assembly. May act as a regulator of Fe-S biogenesis. The protein is Iron-sulfur cluster assembly protein CyaY of Paraburkholderia phytofirmans (strain DSM 17436 / LMG 22146 / PsJN) (Burkholderia phytofirmans).